The sequence spans 95 residues: Large ribosomal subunit protein bL25 (95 aa).

The protein belongs to the bacterial ribosomal protein bL25 family. In terms of assembly, part of the 50S ribosomal subunit; part of the 5S rRNA/L5/L18/L25 subcomplex. Contacts the 5S rRNA. Binds to the 5S rRNA independently of L5 and L18.

This is one of the proteins that binds to the 5S RNA in the ribosome where it forms part of the central protuberance. This is Large ribosomal subunit protein bL25 from Shewanella amazonensis (strain ATCC BAA-1098 / SB2B).